A 108-amino-acid polypeptide reads, in one-letter code: Cell cycle protein GpsB (108 aa).

The stretch at 32–69 (LDNVIKDYENFNAQIEALKAENEALKKAKYQARNTVSA) forms a coiled coil.

The protein belongs to the GpsB family. In terms of assembly, forms polymers through the coiled coil domains. Interacts with PBP1, MreC and EzrA.

The protein resides in the cytoplasm. In terms of biological role, divisome component that associates with the complex late in its assembly, after the Z-ring is formed, and is dependent on DivIC and PBP2B for its recruitment to the divisome. Together with EzrA, is a key component of the system that regulates PBP1 localization during cell cycle progression. Its main role could be the removal of PBP1 from the cell pole after pole maturation is completed. Also contributes to the recruitment of PBP1 to the division complex. Not essential for septum formation. This is Cell cycle protein GpsB from Streptococcus pyogenes serotype M49 (strain NZ131).